The following is a 740-amino-acid chain: Eukaryotic translation initiation factor 3 subunit B (740 aa).

Residues 1–10 (MAPSFDTLSE) are compositionally biased toward polar residues. The interval 1 to 20 (MAPSFDTLSEQDLHEEEEEE) is disordered. Positions 40-126 (TFVVIDGLPV…HTLLVNKLMD (87 aa)) constitute an RRM domain. 6 WD repeats span residues 193-230 (AHWT…KQKQ), 232-289 (PHPF…RSFV), 302-343 (EPKK…LLGK), 455-496 (SLKD…SFFA), 513-556 (IEKK…EKPE), and 571-609 (IEHY…HTFA). The tract at residues 695-721 (DAYGLPEEADDPKLAKDAAATTQEQGE) is disordered.

This sequence belongs to the eIF-3 subunit B family. As to quaternary structure, component of the eukaryotic translation initiation factor 3 (eIF-3) complex.

The protein localises to the cytoplasm. RNA-binding component of the eukaryotic translation initiation factor 3 (eIF-3) complex, which is involved in protein synthesis of a specialized repertoire of mRNAs and, together with other initiation factors, stimulates binding of mRNA and methionyl-tRNAi to the 40S ribosome. The eIF-3 complex specifically targets and initiates translation of a subset of mRNAs involved in cell proliferation. This is Eukaryotic translation initiation factor 3 subunit B (prt1) from Neosartorya fischeri (strain ATCC 1020 / DSM 3700 / CBS 544.65 / FGSC A1164 / JCM 1740 / NRRL 181 / WB 181) (Aspergillus fischerianus).